The following is a 388-amino-acid chain: ATP phosphoribosyltransferase regulatory subunit (388 aa).

It belongs to the class-II aminoacyl-tRNA synthetase family. HisZ subfamily. Heteromultimer composed of HisG and HisZ subunits.

The protein resides in the cytoplasm. Its pathway is amino-acid biosynthesis; L-histidine biosynthesis; L-histidine from 5-phospho-alpha-D-ribose 1-diphosphate: step 1/9. Required for the first step of histidine biosynthesis. May allow the feedback regulation of ATP phosphoribosyltransferase activity by histidine. The sequence is that of ATP phosphoribosyltransferase regulatory subunit from Acinetobacter baylyi (strain ATCC 33305 / BD413 / ADP1).